A 174-amino-acid chain; its full sequence is Photosystem I assembly protein Ycf4 (174 aa).

The next 2 helical transmembrane spans lie at leucine 11–glycine 31 and isoleucine 56–isoleucine 76.

Belongs to the Ycf4 family.

Its subcellular location is the plastid. It is found in the chloroplast thylakoid membrane. Its function is as follows. Seems to be required for the assembly of the photosystem I complex. This is Photosystem I assembly protein Ycf4 from Emiliania huxleyi (Coccolithophore).